The sequence spans 135 residues: Translation initiation factor 2 subunit beta (135 aa).

Belongs to the eIF-2-beta/eIF-5 family. In terms of assembly, heterotrimer composed of an alpha, a beta and a gamma chain.

In terms of biological role, eIF-2 functions in the early steps of protein synthesis by forming a ternary complex with GTP and initiator tRNA. The sequence is that of Translation initiation factor 2 subunit beta from Methanobrevibacter smithii (strain ATCC 35061 / DSM 861 / OCM 144 / PS).